Consider the following 738-residue polypeptide: Catalase-peroxidase (738 aa).

Residues 1-24 (MSEEHPPIAEANSQPSNGCPVAGG) are disordered. The tryptophyl-tyrosyl-methioninium (Trp-Tyr) (with M-257) cross-link spans 108–231 (WHAAGTYRVG…LAAVQMGLIY (124 aa)). The active-site Proton acceptor is the H109. The tryptophyl-tyrosyl-methioninium (Tyr-Met) (with W-108) cross-link spans 231–257 (YVNPEGPNGNPDPLAAAIDIRETFGRM). H272 provides a ligand contact to heme b.

Belongs to the peroxidase family. Peroxidase/catalase subfamily. As to quaternary structure, homodimer or homotetramer. It depends on heme b as a cofactor. Post-translationally, formation of the three residue Trp-Tyr-Met cross-link is important for the catalase, but not the peroxidase activity of the enzyme.

It catalyses the reaction H2O2 + AH2 = A + 2 H2O. It carries out the reaction 2 H2O2 = O2 + 2 H2O. In terms of biological role, bifunctional enzyme with both catalase and broad-spectrum peroxidase activity. The protein is Catalase-peroxidase of Mycobacteroides abscessus (strain ATCC 19977 / DSM 44196 / CCUG 20993 / CIP 104536 / JCM 13569 / NCTC 13031 / TMC 1543 / L948) (Mycobacterium abscessus).